The chain runs to 430 residues: Phosphomethylpyrimidine synthase (430 aa).

Residues Asn-67, Met-96, Tyr-125, His-161, 183 to 185 (SRG), 224 to 227 (DALR), and Glu-263 each bind substrate. A Zn(2+)-binding site is contributed by His-267. Tyr-290 contributes to the substrate binding site. His-331 is a binding site for Zn(2+). [4Fe-4S] cluster contacts are provided by Cys-406, Cys-409, and Cys-413.

It belongs to the ThiC family. As to quaternary structure, homodimer. The cofactor is [4Fe-4S] cluster.

The enzyme catalyses 5-amino-1-(5-phospho-beta-D-ribosyl)imidazole + S-adenosyl-L-methionine = 4-amino-2-methyl-5-(phosphooxymethyl)pyrimidine + CO + 5'-deoxyadenosine + formate + L-methionine + 3 H(+). The protein operates within cofactor biosynthesis; thiamine diphosphate biosynthesis. Its function is as follows. Catalyzes the synthesis of the hydroxymethylpyrimidine phosphate (HMP-P) moiety of thiamine from aminoimidazole ribotide (AIR) in a radical S-adenosyl-L-methionine (SAM)-dependent reaction. The polypeptide is Phosphomethylpyrimidine synthase (Campylobacter jejuni (strain RM1221)).